Consider the following 32-residue polypeptide: Zinc metalloproteinase/disintegrin-like CdtV1 (32 aa).

Cystine bridges form between cysteine 5/cysteine 14 and cysteine 7/cysteine 15.

The protein belongs to the venom metalloproteinase (M12B) family. P-II subfamily. P-IIa sub-subfamily. In terms of assembly, monomer. In terms of tissue distribution, expressed by the venom gland.

It is found in the secreted. Snake venom metalloproteinase that impairs hemostasis in the envenomed animal. The protein is Zinc metalloproteinase/disintegrin-like CdtV1 of Crotalus durissus terrificus (South American rattlesnake).